Consider the following 561-residue polypeptide: MADHNPDGDPTPRTLLRRVLDTADPRTPRRPRSARAGAQRALLETASSRRLSGQTKTIAKGRSRGARSIGRSAHVQARGHLEEQTPRTLLKNILLTAPESSILMPESVVKPVPAPQVVQPSRRESSRGSLELQLPELEPSTTLAPGLLAPGRRKQRLRLSMFQQGVDQGLPLSQEPQGNADASSLTSSLNLTFATPLQPQSVQRPGLARRPPARRAVDVGAFLRDLRDTSLAPPNIVLEDTQPFSQPTVGSPNVYHSLPCTPHTGAEDAEQAAGRRTQSSGPGLQNNSPGKPAQFLAGEAEEVDAFALGFLSTSSGVSGEDEVEPLHNGVEEAEKKMKEEGVSVSEMEATGAQGPSRAEEPEGHTQVTEAEGSQGTAEAEGPGASSGDEDASSRAASPELASSTPESLQARRHHQFPEPAPPPGAAVLSSEPAEPLLVRCPPRSRTTGPRPRQDPHKAGLSHYVKLFSFFAKMPMERKALEMVEKCLDKYFQHLCDDLEVFAAHAGRKTVKPEDLELLMRRQGLVTDQVSLHVLVERHLPLEYRQLLIPCAYSGNSVFPAQ.

The disordered stretch occupies residues 1 to 78; sequence MADHNPDGDP…IGRSAHVQAR (78 aa). Basic and acidic residues predominate over residues 18–27; that stretch reads RVLDTADPRT. The span at 45–57 shows a compositional bias: polar residues; the sequence is TASSRRLSGQTKT. S47 carries the phosphoserine modification. T85 carries the post-translational modification Phosphothreonine. Residues 93–421 form a flexible stalk domain region; it reads ILLTAPESSI…RHHQFPEPAP (329 aa). Disordered regions lie at residues 114-134, 256-293, and 314-457; these read APQV…ELQL, HSLP…GKPA, and SSGV…DPHK. Residues 276-289 are compositionally biased toward polar residues; that stretch reads RTQSSGPGLQNNSP. A compositionally biased stretch (basic and acidic residues) spans 329–341; the sequence is GVEEAEKKMKEEG. S343, S345, S356, S373, S385, S386, and S397 each carry phosphoserine. Positions 365–376 are enriched in polar residues; the sequence is TQVTEAEGSQGT. The segment covering 439 to 450 has biased composition (low complexity); the sequence is RCPPRSRTTGPR.

Belongs to the CENP-T/CNN1 family. In terms of assembly, component of the CENPA-CAD complex, composed of CENPI, CENPK, CENPL, CENPO, CENPP, CENPQ, CENPR and CENPS. The CENPA-CAD complex is probably recruited on centromeres by the CENPA-NAC complex, at least composed of CENPA, CENPC, CENPH, CENPM, CENPN, CENPT and CENPU. Identified in a centromeric complex containing histones H2A, H2B, H3 and H4, and at least CENPA, CENPB, CENPC, CENPT, CENPN, HJURP, SUPT16H, SSRP1 and RSF1. Interacts (via N-terminus) with the NDC80 complex. Heterodimer with CENPW; this dimer coassembles with CENPS-CENPX heterodimers at centromeres to form the tetrameric CENP-T-W-S-X complex. In terms of processing, dynamically phosphorylated during the cell cycle. Phosphorylated during G2 phase, metaphase and anaphase, but not during telophase or G1 phase.

The protein resides in the nucleus. Its subcellular location is the chromosome. It localises to the centromere. It is found in the kinetochore. Functionally, component of the CENPA-NAC (nucleosome-associated) complex, a complex that plays a central role in assembly of kinetochore proteins, mitotic progression and chromosome segregation. The CENPA-NAC complex recruits the CENPA-CAD (nucleosome distal) complex and may be involved in incorporation of newly synthesized CENPA into centromeres. Part of a nucleosome-associated complex that binds specifically to histone H3-containing nucleosomes at the centromere, as opposed to nucleosomes containing CENPA. Component of the heterotetrameric CENP-T-W-S-X complex that binds and supercoils DNA, and plays an important role in kinetochore assembly. CENPT has a fundamental role in kinetochore assembly and function. It is one of the inner kinetochore proteins, with most further proteins binding downstream. Required for normal chromosome organization and normal progress through mitosis. This is Centromere protein T (CENPT) from Macaca fascicularis (Crab-eating macaque).